A 77-amino-acid chain; its full sequence is Translational regulator CsrA (77 aa).

This sequence belongs to the CsrA/RsmA family. As to quaternary structure, homodimer; the beta-strands of each monomer intercalate to form a hydrophobic core, while the alpha-helices form wings that extend away from the core.

It localises to the cytoplasm. A translational regulator that binds mRNA to regulate translation initiation and/or mRNA stability. Usually binds in the 5'-UTR at or near the Shine-Dalgarno sequence preventing ribosome-binding, thus repressing translation. Its main target seems to be the major flagellin gene, while its function is anatagonized by FliW. The polypeptide is Translational regulator CsrA (Pseudarthrobacter chlorophenolicus (strain ATCC 700700 / DSM 12829 / CIP 107037 / JCM 12360 / KCTC 9906 / NCIMB 13794 / A6) (Arthrobacter chlorophenolicus)).